The chain runs to 1203 residues: MIDVNNFEYMKIGLASPDKIRSWSYGEVKKPETINYRTLKPEKDGLFCERIFGPQKDWECHCGKYKRVRYKGVVCDRCGVEVTRAKVRRERMGHIELAAPVSHIWYFKGIPSRMGLVLDMSPRALEEVIYFASYVVTESGDTPLDKKQLLSEKEYRAYRDRYGSTFQAAMGAEAIKKLLQDIDLDKEVDFLKEELKTAQGQRRTRAIKRLEVLEAFRNSGNEPSWMILDVLPVIPPELRPMVQLDGGRFATSDLNDLYRRVINRNNRLKRLLDLGAPSIIVQNEKRMLQEAVDALIDNGRRGRPVTGPGNRPLKSLSHMLKGKQGRFRQNLLGKRVDYSGRSVIVVGPNLKMYQCGLPKEMALELFKPFVMKELVEKGLAHNIKSAKRKIERVQPEVWDVLESVIKEHPVLLNRAPTLHRLGIQAFEPTLVEGRAIRLHPLVCTAYNADFDGDQMAVHVPLSSEAQAEARLLMLAAQNILNPKDGKPVVTPSQDMVLGNYYLTLEREGAIGEGMVFKDANEALLAYQNGYVHLHTRVAVAASAVNNVTFTEEQKNMLLLTTVGKLIFNEILPESFPYINEPTNSNLEKETPAKYFVEKGANIKEIIASREEVAPFSKKILGNIIAEVFKRFKITETSRMLDRMKNLGFKYSTKAGITVGVSDILVLGEKDEILHEAQAKVDNVIKQFRRGLITEEERYDRVISIWSNAKDVIQGKLMKSLNKRNPIFMMSDSGARGNASNFTQLAGMRGLMANPSGRIIELPIKSSFREGLTVLEYFISTHGARKGLADTALKTADSGYLTRRLVDVAQDVIVREDDCGTDRGLLIGAIKEGNEVIESLYDRLVGRFARKTVKHPETGEVLVAENQLITEDIAHIVENSGVETVNIRSAFTCNTRHGVCKKCYGRNLATGTDVEVGEAVGIIAAQSIGEPGTQLTMRTFHTGGVAGDDITQGLPRIQEIFEARNPKGQAVISEIDGVIAAINDVKDRQEVVVQGEVEARTYAIPYGARLKVIPGQKISHGKELTEGSIDPKELLKVTDITAVQEYLLREVQKVYRMQGVEIGDKHVEVMVRQMLRKVRVSDAGETDVLPGTLLDIHQFTDANAKVLLQGKQPATARPVLLGITKASLETDSFLSAASFQETTRVLTDAAIKGKRDELLGLKENVIIGKLVPAGTGMNRYRKVDLVKTTQDDMNVENDEVYVEQ.

Zn(2+) contacts are provided by C60, C62, C75, and C78. Mg(2+) contacts are provided by D449, D451, and D453. Zn(2+)-binding residues include C818, C892, C899, and C902.

The protein belongs to the RNA polymerase beta' chain family. The RNAP catalytic core consists of 2 alpha, 1 beta, 1 beta' and 1 omega subunit. When a sigma factor is associated with the core the holoenzyme is formed, which can initiate transcription. It depends on Mg(2+) as a cofactor. The cofactor is Zn(2+).

It catalyses the reaction RNA(n) + a ribonucleoside 5'-triphosphate = RNA(n+1) + diphosphate. Functionally, DNA-dependent RNA polymerase catalyzes the transcription of DNA into RNA using the four ribonucleoside triphosphates as substrates. This Bacillus anthracis protein is DNA-directed RNA polymerase subunit beta'.